Reading from the N-terminus, the 196-residue chain is uncharacterized protein (196 aa).

To H.influenzae HI_0431.

This is an uncharacterized protein from Escherichia coli (strain K12).